We begin with the raw amino-acid sequence, 98 residues long: Large ribosomal subunit protein uL23 (98 aa).

It belongs to the universal ribosomal protein uL23 family. Part of the 50S ribosomal subunit. Contacts protein L29, and trigger factor when it is bound to the ribosome.

One of the early assembly proteins it binds 23S rRNA. One of the proteins that surrounds the polypeptide exit tunnel on the outside of the ribosome. Forms the main docking site for trigger factor binding to the ribosome. The protein is Large ribosomal subunit protein uL23 of Bordetella avium (strain 197N).